A 473-amino-acid chain; its full sequence is MPRLASAVLPLCSQHPGQCGLFPLEKSLDAFAARYRLAEMAEHTLDVQYYIWQDDMSGRLLFSALLAAAKRGVRVRLLLDDNNTPGLDDILRLLDSHPRIEVRLFNPFSFRLLRPLGYITDFSRLNRRMHNKSFTVDGVVTLVGGRNIGDAYFGAGEEPLFSDLDVMAIGPVVEDVADDFARYWYCKSVSPLQQVLDVPEGEMADRIELPASWHNDAMTHRYLRKMESSPFINHLVDGTLPLIWAKTRLLSDDPAKGEGKAKRHSLLPQRLFDIMGSPSERIDIISSYFVPTRAGVAQLLRMVRKGVKIAILTNSLAANDVAVVHAGYARWRKKLLRYGVELYELKPTREQSSTLHDRGITGNSGASLHAKTFSIDGKTVFIGSFNFDPRSTLLNTEMGFVIESETLAQLIDKRFIQSQYDAAWQLRLDRWGRINWVDRHAKKEIILKKEPATSFWKRVMVRLASILPVEWLL.

2 consecutive PLD phosphodiesterase domains span residues 125–152 and 364–391; these read LNRR…GDAY and SGAS…DPRS. Residues H130, K132, D137, H369, K371, and D376 contribute to the active site.

It belongs to the phospholipase D family. Cardiolipin synthase subfamily. ClsC sub-subfamily.

It catalyses the reaction a 1,2-diacyl-sn-glycero-3-phospho-(1'-sn-glycerol) + a 1,2-diacyl-sn-glycero-3-phosphoethanolamine = a cardiolipin + ethanolamine. Full activity requires coexpression with the neighboring gene ymdB. Catalyzes the synthesis of cardiolipin (CL) (diphosphatidylglycerol) from phosphatidylglycerol (PG) and phosphatidylethanolamine (PE). This is Cardiolipin synthase C from Escherichia coli (strain K12).